A 144-amino-acid chain; its full sequence is Large ribosomal subunit protein uL14 (144 aa).

It belongs to the universal ribosomal protein uL14 family. As to quaternary structure, part of the 50S ribosomal subunit. Forms a cluster with proteins L3 and L24e, part of which may contact the 16S rRNA in 2 intersubunit bridges.

In terms of biological role, binds to 23S rRNA. Forms part of two intersubunit bridges in the 70S ribosome. The polypeptide is Large ribosomal subunit protein uL14 (Pyrobaculum arsenaticum (strain DSM 13514 / JCM 11321 / PZ6)).